A 670-amino-acid polypeptide reads, in one-letter code: ATP synthase subunit alpha 2 (670 aa).

Position 180-187 (180-187 (GDRATGKT)) interacts with ATP. The interval 527–670 (AEDAAGDIGG…DAEAEARHKR (144 aa)) is disordered. Residues 543-588 (ARGDADRDADHGANREVSREVSPEASREVSREVSREVSHEADRDAA) show a composition bias toward basic and acidic residues. A compositionally biased stretch (low complexity) spans 589–599 (ADAARVAGRAP). The span at 621–639 (ADGDRASASRPRPDARGDA) shows a compositional bias: basic and acidic residues. Residues 640 to 661 (ARTAPSPQGGAEVNVNAAANVD) show a composition bias toward low complexity.

This sequence belongs to the ATPase alpha/beta chains family. In terms of assembly, F-type ATPases have 2 components, CF(1) - the catalytic core - and CF(0) - the membrane proton channel. CF(1) has five subunits: alpha(3), beta(3), gamma(1), delta(1), epsilon(1). CF(0) has three main subunits: a(1), b(2) and c(9-12). The alpha and beta chains form an alternating ring which encloses part of the gamma chain. CF(1) is attached to CF(0) by a central stalk formed by the gamma and epsilon chains, while a peripheral stalk is formed by the delta and b chains.

It is found in the cell inner membrane. The catalysed reaction is ATP + H2O + 4 H(+)(in) = ADP + phosphate + 5 H(+)(out). Functionally, produces ATP from ADP in the presence of a proton gradient across the membrane. The alpha chain is a regulatory subunit. In Burkholderia pseudomallei (strain 668), this protein is ATP synthase subunit alpha 2.